The primary structure comprises 266 residues: Thiazole synthase (266 aa).

Catalysis depends on lysine 107, which acts as the Schiff-base intermediate with DXP. Residues glycine 168, 194-195 (AG), and 216-217 (NT) contribute to the 1-deoxy-D-xylulose 5-phosphate site.

It belongs to the ThiG family. Homotetramer. Forms heterodimers with either ThiH or ThiS.

The protein localises to the cytoplasm. The enzyme catalyses [ThiS sulfur-carrier protein]-C-terminal-Gly-aminoethanethioate + 2-iminoacetate + 1-deoxy-D-xylulose 5-phosphate = [ThiS sulfur-carrier protein]-C-terminal Gly-Gly + 2-[(2R,5Z)-2-carboxy-4-methylthiazol-5(2H)-ylidene]ethyl phosphate + 2 H2O + H(+). The protein operates within cofactor biosynthesis; thiamine diphosphate biosynthesis. Functionally, catalyzes the rearrangement of 1-deoxy-D-xylulose 5-phosphate (DXP) to produce the thiazole phosphate moiety of thiamine. Sulfur is provided by the thiocarboxylate moiety of the carrier protein ThiS. In vitro, sulfur can be provided by H(2)S. The protein is Thiazole synthase of Azorhizobium caulinodans (strain ATCC 43989 / DSM 5975 / JCM 20966 / LMG 6465 / NBRC 14845 / NCIMB 13405 / ORS 571).